Consider the following 193-residue polypeptide: ATP-dependent Clp protease proteolytic subunit (193 aa).

Catalysis depends on S98, which acts as the Nucleophile. The active site involves H123.

It belongs to the peptidase S14 family. In terms of assembly, fourteen ClpP subunits assemble into 2 heptameric rings which stack back to back to give a disk-like structure with a central cavity, resembling the structure of eukaryotic proteasomes.

The protein resides in the cytoplasm. The catalysed reaction is Hydrolysis of proteins to small peptides in the presence of ATP and magnesium. alpha-casein is the usual test substrate. In the absence of ATP, only oligopeptides shorter than five residues are hydrolyzed (such as succinyl-Leu-Tyr-|-NHMec, and Leu-Tyr-Leu-|-Tyr-Trp, in which cleavage of the -Tyr-|-Leu- and -Tyr-|-Trp bonds also occurs).. In terms of biological role, cleaves peptides in various proteins in a process that requires ATP hydrolysis. Has a chymotrypsin-like activity. Plays a major role in the degradation of misfolded proteins. This Histophilus somni (strain 2336) (Haemophilus somnus) protein is ATP-dependent Clp protease proteolytic subunit.